Consider the following 496-residue polypeptide: Solute carrier family 2, facilitated glucose transporter member 11 (496 aa).

The Cytoplasmic segment spans residues 1 to 11 (MRALRRLIQGR). Residues 12–32 (ILLLTICAAGIGGTFQFGYNL) form a helical membrane-spanning segment. Topologically, residues 33–61 (SIINAPTLHIQEFTNETWQARTGEPLPDH) are extracellular. An N-linked (GlcNAc...) asparagine glycan is attached at Asn47. Residues 62–82 (LVLLMWSLIVSLYPLGGLFGA) traverse the membrane as a helical segment. Topologically, residues 83–97 (LLAGPLAITLGRKKS) are cytoplasmic. The helical transmembrane segment at 98–118 (LLVNNIFVVSAAILFGFSRKA) threads the bilayer. Residues 119-128 (GSFEMIMLGR) are Extracellular-facing. A helical membrane pass occupies residues 129 to 149 (LLVGVNAGVSMNIQPMYLGES). At 150 to 157 (APKELRGA) the chain is on the cytoplasmic side. The helical transmembrane segment at 158 to 178 (VAMSSAIFTALGIVMGQVVGL) threads the bilayer. The Extracellular segment spans residues 179-187 (RELLGGPQA). A helical membrane pass occupies residues 188–208 (WPLLLASCLVPGALQLASLPL). The Cytoplasmic segment spans residues 209–273 (LPESPRYLLI…LFQHRALRRQ (65 aa)). A helical transmembrane segment spans residues 274–294 (VTSLVVLGSAMELCGNDSVYA). Topologically, residues 295–311 (YASSVFRKAGVPEAKIQ) are extracellular. The chain crosses the membrane as a helical span at residues 312-332 (YAIIGTGSCELLTAVVSCVVI). Over 333-338 (ERVGRR) the chain is Cytoplasmic. A helical membrane pass occupies residues 339-359 (VLLIGGYSLMTCWGSIFTVAL). Topologically, residues 360–364 (CLQSS) are extracellular. Residues 365–385 (FPWTLYLAMACIFAFILSFGI) form a helical membrane-spanning segment. Over 386-408 (GPAGVTGILATELFDQMARPAAC) the chain is Cytoplasmic. A helical transmembrane segment spans residues 409-429 (MVCGALMWIMLILVGLGFPFI). The Extracellular segment spans residues 430 to 435 (MEALSH). The helical transmembrane segment at 436 to 456 (FLYVPFLGVCVCGAIYTGLFL) threads the bilayer. Over 457-496 (PETKGKTFQEISKELHRLNFPRRAQGPTWRSLEVIQSTEL) the chain is Cytoplasmic.

Belongs to the major facilitator superfamily. Sugar transporter (TC 2.A.1.1) family. Glucose transporter subfamily. As to expression, expressed in heart and skeletal muscle.

Its subcellular location is the cell membrane. It carries out the reaction D-glucose(out) = D-glucose(in). Its function is as follows. Facilitative glucose transporter. This chain is Solute carrier family 2, facilitated glucose transporter member 11, found in Homo sapiens (Human).